Reading from the N-terminus, the 96-residue chain is Protein RnfH (96 aa).

It belongs to the UPF0125 (RnfH) family.

The polypeptide is Protein RnfH (Psychromonas ingrahamii (strain DSM 17664 / CCUG 51855 / 37)).